The primary structure comprises 273 residues: MDIGLREWLIVIGIIVIAGILFDGWRRMRGGKGKLKFKLDRSLSNLPDVDDSPELLGPARVVNREHEPSLSENDLPPVTARESSKKRRQDEPYQGDLQLSTEEPVPTLLDPVVGDDDDLQERPQKEQAPVEEVLVINVISRDPHGFRGPALLQNILESGLRFGEMDIFHRHESMAGNGEVLFSMANAVKPGTFDLDDIDHFTTPAVSFFLGLPGPRHPKQAFDVMVAAARKLSQELNGELKDDQRSVLTAQTIEHYRQRIVEFERRQMTIKQR.

A topological domain (periplasmic) is located at residue M1. The helical transmembrane segment at 2 to 22 threads the bilayer; sequence DIGLREWLIVIGIIVIAGILF. Residues 23 to 273 are Cytoplasmic-facing; that stretch reads DGWRRMRGGK…ERRQMTIKQR (251 aa). Residues 61 to 127 are disordered; that stretch reads VVNREHEPSL…DLQERPQKEQ (67 aa).

This sequence belongs to the ZipA family. As to quaternary structure, interacts with FtsZ via their C-terminal domains.

It localises to the cell inner membrane. Its function is as follows. Essential cell division protein that stabilizes the FtsZ protofilaments by cross-linking them and that serves as a cytoplasmic membrane anchor for the Z ring. Also required for the recruitment to the septal ring of downstream cell division proteins. This chain is Cell division protein ZipA, found in Stutzerimonas stutzeri (strain A1501) (Pseudomonas stutzeri).